Reading from the N-terminus, the 520-residue chain is Chaperone Ric-8B (520 aa).

Position 468 is a phosphoserine (Ser468). Position 473 is a phosphothreonine (Thr473).

It belongs to the synembryn family. In terms of assembly, interacts with GDP-bound G(s) G-alpha proteins GNAL and GNAS. Does not interact with G-alpha proteins when they are in complex with subunits beta and gamma. As to expression, predominantly expressed in the mature olfactory sensory neurons and also in a few regions in the brain.

Its subcellular location is the cytoplasm. The protein localises to the cell cortex. Chaperone that specifically binds and folds nascent G(s) G-alpha proteins (GNAS and GNAL) prior to G protein heterotrimer formation, promoting their association with the plasma membrane. Also acts as a guanine nucleotide exchange factor (GEF) for G(s) proteins by stimulating exchange of bound GDP for free GTP. Acts as an important component for odorant signal transduction by mediating GNAL (G(olf)-alpha) folding, thereby promoting-dependent cAMP accumulation in olfactory sensory neurons. This chain is Chaperone Ric-8B, found in Mus musculus (Mouse).